The chain runs to 262 residues: Cytochrome c oxidase subunit 3 (262 aa).

The next 7 membrane-spanning stretches (helical) occupy residues 16–36, 39–59, 83–103, 128–148, 160–180, 198–218, and 241–261; these read PWPYVGACGALFITVGSVVYF, SQTWVLLMGAITLSLTMIVWW, GMLLFILSEVLFFFSFFWAFF, FSVPLLNTAVLLSSGATVTWA, AINGLTITVVLGLIFTGLQAM, FFVATGFHGMHVIIGTTFLAV, and WYWHFVDVVWLFLYICIYWWG.

This sequence belongs to the cytochrome c oxidase subunit 3 family. Component of the cytochrome c oxidase (complex IV, CIV), a multisubunit enzyme composed of a catalytic core of 3 subunits and several supernumerary subunits. The complex exists as a monomer or a dimer and forms supercomplexes (SCs) in the inner mitochondrial membrane with ubiquinol-cytochrome c oxidoreductase (cytochrome b-c1 complex, complex III, CIII).

It is found in the mitochondrion inner membrane. The catalysed reaction is 4 Fe(II)-[cytochrome c] + O2 + 8 H(+)(in) = 4 Fe(III)-[cytochrome c] + 2 H2O + 4 H(+)(out). Functionally, component of the cytochrome c oxidase, the last enzyme in the mitochondrial electron transport chain which drives oxidative phosphorylation. The respiratory chain contains 3 multisubunit complexes succinate dehydrogenase (complex II, CII), ubiquinol-cytochrome c oxidoreductase (cytochrome b-c1 complex, complex III, CIII) and cytochrome c oxidase (complex IV, CIV), that cooperate to transfer electrons derived from NADH and succinate to molecular oxygen, creating an electrochemical gradient over the inner membrane that drives transmembrane transport and the ATP synthase. Cytochrome c oxidase is the component of the respiratory chain that catalyzes the reduction of oxygen to water. Electrons originating from reduced cytochrome c in the intermembrane space (IMS) are transferred via the dinuclear copper A center (CU(A)) of subunit 2 and heme A of subunit 1 to the active site in subunit 1, a binuclear center (BNC) formed by heme A3 and copper B (CU(B)). The BNC reduces molecular oxygen to 2 water molecules using 4 electrons from cytochrome c in the IMS and 4 protons from the mitochondrial matrix. In Metridium senile (Brown sea anemone), this protein is Cytochrome c oxidase subunit 3 (COIII).